The following is a 1289-amino-acid chain: Outer capsid protein lambda-2 (1289 aa).

Residue 893–900 (GAAAAGKS) participates in ATP binding.

The protein belongs to the orthoreovirus lambda-2 protein family. Interacts with protein mu-NS; in viral inclusions.

It is found in the virion. It carries out the reaction a 5'-end diphospho-ribonucleoside in mRNA + GTP + H(+) = a 5'-end (5'-triphosphoguanosine)-ribonucleoside in mRNA + diphosphate. It catalyses the reaction a 5'-end (5'-triphosphoguanosine)-ribonucleoside in mRNA + S-adenosyl-L-methionine = a 5'-end (N(7)-methyl 5'-triphosphoguanosine)-ribonucleoside in mRNA + S-adenosyl-L-homocysteine. In terms of biological role, outer capsid protein involved in mRNA capping. Catalyzes the last 3 enzymatic activities for formation of the 5' cap structure on the viral plus-strand transcripts, namely the RNA guanylyltransferase, RNA-7N- and RNA-2'O-methyltransferase activities. The sequence is that of Outer capsid protein lambda-2 (L2) from Reovirus type 1 (strain Lang) (T1L).